We begin with the raw amino-acid sequence, 271 residues long: Ubiquitin thioesterase OTUB1 (271 aa).

Position 2 is an N-acetylalanine (Ala2). A Phosphoserine modification is found at Ser16. Tyr26 bears the Phosphotyrosine; by SRC mark. The region spanning 80–271 (SYIRKTRPDG…RPGHYDILYK (192 aa)) is the OTU domain. The active site involves Asp88. Cys91 functions as the Nucleophile in the catalytic mechanism. Ubiquitin-conjugating enzyme E2 binding regions lie at residues 130–138 (FTEFTIEDF) and 169–177 (DYLVVYLRL). Positions 189–195 (FFEHFIE) are free ubiquitin binding. The tract at residues 206 to 213 (QEVEPMCK) is ubiquitin-conjugating enzyme E2 binding. 2 free ubiquitin binding regions span residues 214 to 221 (ESDHIHII) and 245 to 251 (NPHIFPE). His265 is a catalytic residue.

Belongs to the peptidase C65 family. As to quaternary structure, interacts with FUS and RACK1. Interacts with UBE2D1/UBCH5A, UBE2W/UBC16 and UBE2N/UBC13. Interacts with RNF128. Forms a ternary complex with RNF128 and USP8. Interacts with the C-terminal UCH catalytic domain of USP8. In terms of assembly, interacts with RNF128. Does not associate with USP8. Phosphorylation at Tyr-26 by SRC and SRMS promotes deubiquitination of RPTOR via a non-catalytic process. Isoform 1 is ubiquitous. Isoform 2 is expressed only in lymphoid tissues such as tonsils, lymph nodes and spleen, as well as peripheral blood mononuclear cells.

It localises to the cytoplasm. It catalyses the reaction Thiol-dependent hydrolysis of ester, thioester, amide, peptide and isopeptide bonds formed by the C-terminal Gly of ubiquitin (a 76-residue protein attached to proteins as an intracellular targeting signal).. By free ubiquitin: binding of free ubiquitin triggers conformational changes in the OTU domain and formation of a ubiquitin-binding helix in the N-terminus, promoting binding of the conjugated donor ubiquitin in UBE2N/UBC13 to OTUB1. In terms of biological role, hydrolase that can specifically remove 'Lys-48'-linked conjugated ubiquitin from proteins and plays an important regulatory role at the level of protein turnover by preventing degradation. Regulator of T-cell anergy, a phenomenon that occurs when T-cells are rendered unresponsive to antigen rechallenge and no longer respond to their cognate antigen. Acts via its interaction with RNF128/GRAIL, a crucial inductor of CD4 T-cell anergy. Isoform 1 destabilizes RNF128, leading to prevent anergy. In contrast, isoform 2 stabilizes RNF128 and promotes anergy. Surprisingly, it regulates RNF128-mediated ubiquitination, but does not deubiquitinate polyubiquitinated RNF128. Deubiquitinates estrogen receptor alpha (ESR1). Mediates deubiquitination of 'Lys-48'-linked polyubiquitin chains, but not 'Lys-63'-linked polyubiquitin chains. Not able to cleave di-ubiquitin. Also capable of removing NEDD8 from NEDD8 conjugates, but with a much lower preference compared to 'Lys-48'-linked ubiquitin. Functionally, plays a key non-catalytic role in DNA repair regulation by inhibiting activity of RNF168, an E3 ubiquitin-protein ligase that promotes accumulation of 'Lys-63'-linked histone H2A and H2AX at DNA damage sites. Inhibits RNF168 independently of ubiquitin thioesterase activity by binding and inhibiting UBE2N/UBC13, the E2 partner of RNF168, thereby limiting spreading of 'Lys-63'-linked histone H2A and H2AX marks. Inhibition occurs by binding to free ubiquitin: free ubiquitin acts as an allosteric regulator that increases affinity for UBE2N/UBC13 and disrupts interaction with UBE2V1. The OTUB1-UBE2N/UBC13-free ubiquitin complex adopts a configuration that mimics a cleaved 'Lys48'-linked di-ubiquitin chain. Acts as a regulator of mTORC1 and mTORC2 complexes. When phosphorylated at Tyr-26, acts as an activator of the mTORC1 complex by mediating deubiquitination of RPTOR via a non-catalytic process: acts by binding and inhibiting the activity of the ubiquitin-conjugating enzyme E2 (UBE2D1/UBCH5A, UBE2W/UBC16 and UBE2N/UBC13), thereby preventing ubiquitination of RPTOR. Can also act as an inhibitor of the mTORC1 and mTORC2 complexes in response to amino acids by mediating non-catalytic deubiquitination of DEPTOR. The chain is Ubiquitin thioesterase OTUB1 (OTUB1) from Homo sapiens (Human).